The primary structure comprises 548 residues: Chaperonin GroEL (548 aa).

Residues 29–32 (TLGP), Lys50, 86–90 (DGTTT), Gly414, 478–480 (NAA), and Asp494 contribute to the ATP site.

It belongs to the chaperonin (HSP60) family. In terms of assembly, forms a cylinder of 14 subunits composed of two heptameric rings stacked back-to-back. Interacts with the co-chaperonin GroES.

Its subcellular location is the cytoplasm. The enzyme catalyses ATP + H2O + a folded polypeptide = ADP + phosphate + an unfolded polypeptide.. Together with its co-chaperonin GroES, plays an essential role in assisting protein folding. The GroEL-GroES system forms a nano-cage that allows encapsulation of the non-native substrate proteins and provides a physical environment optimized to promote and accelerate protein folding. The protein is Chaperonin GroEL of Alcanivorax borkumensis (strain ATCC 700651 / DSM 11573 / NCIMB 13689 / SK2).